We begin with the raw amino-acid sequence, 299 residues long: Taste receptor type 2 member 1 (299 aa).

Over 1 to 9 (MLESHLIIY) the chain is Extracellular. A helical transmembrane segment spans residues 10–30 (FLLAVIQFLLGIFTNGIIVVV). Residues 31-55 (NGIDLIKHRKMAPLDLLLSCLAVSR) lie on the Cytoplasmic side of the membrane. A helical transmembrane segment spans residues 56-76 (IFLQLFIFYVNVIVIFFIEFI). Topologically, residues 77-81 (MCSAN) are extracellular. Residues 82–102 (CAILLFVNELELWLATWLGVF) traverse the membrane as a helical segment. Residues 103 to 124 (YCAKVASVRHPLFIWLKMRISK) are Cytoplasmic-facing. A helical transmembrane segment spans residues 125–145 (LVPWMILGSLLYVSMICVFHS). The Extracellular segment spans residues 146–178 (KYAGFMVPHFLRNFFSQNATIQKEDTLAIQIFS). Asparagine 163 is a glycosylation site (N-linked (GlcNAc...) asparagine). A helical membrane pass occupies residues 179-199 (FVAEFSVPLLIFLVAVLLLIF). At 200 to 222 (SLGRHTRQMRNTVAGSRVPGRGA) the chain is on the cytoplasmic side. The chain crosses the membrane as a helical span at residues 223 to 243 (PISALLSILSFLILYFSHCMI). Over 244-257 (KVFLSSLKFHVRRF) the chain is Extracellular. A helical membrane pass occupies residues 258-278 (IFLFFILVIGIYPSGHSLILI). Topologically, residues 279 to 299 (LGNPKLKQNAKKFLLHSKCCQ) are cytoplasmic.

The protein belongs to the G-protein coupled receptor T2R family.

It localises to the membrane. In terms of biological role, receptor that may play a role in the perception of bitterness and is gustducin-linked. May play a role in sensing the chemical composition of the gastrointestinal content. The activity of this receptor may stimulate alpha gustducin, mediate PLC-beta-2 activation and lead to the gating of TRPM5. The protein is Taste receptor type 2 member 1 (TAS2R1) of Pan paniscus (Pygmy chimpanzee).